We begin with the raw amino-acid sequence, 316 residues long: MLVTLGLLTSFFSFLYMVAPSIRKFFAGGVCRTNVQLPGKVVVITGANTGIGKETARELASRGARVYIACRDVLKGESAASEIRVDTKNSQVLVRKLDLSDTKSIRAFAEGFLAEEKQLHILINNAGVMMCPYSKTADGFETHLGVNHLGHFLLTYLLLERLKVSAPARVVNVSSVAHHIGKIPFHDLQSEKRYSRGFAYCHSKLANVLFTRELAKRLQGTGVTTYAVHPGVVRSELVRHSSLLCLLWRLFSPFVKTAREGAQTSLHCALAEGLEPLSGKYFSDCKRTWVSPRARNNKTAERLWNVSCELLGIRWE.

46–52 (GANTGIG) contacts NADP(+). Serine 175 contributes to the substrate binding site. Tyrosine 200 functions as the Proton acceptor in the catalytic mechanism.

The protein belongs to the short-chain dehydrogenases/reductases (SDR) family. In terms of tissue distribution, widely expressed, mostly in retina, kidney, brain, skeletal muscle, pancreas and stomach.

It is found in the endoplasmic reticulum membrane. It carries out the reaction all-trans-retinol + NADP(+) = all-trans-retinal + NADPH + H(+). The catalysed reaction is 11-cis-retinol + NADP(+) = 11-cis-retinal + NADPH + H(+). The enzyme catalyses 9-cis-retinol + NADP(+) = 9-cis-retinal + NADPH + H(+). It catalyses the reaction a 4-hydroxynonen-1-ol + NADP(+) = a 4-hydroxynonenal + NADPH + H(+). It carries out the reaction (E)-non-2-en-1-ol + NADP(+) = (E)-non-2-enal + NADPH + H(+). The catalysed reaction is (Z)-non-6-en-1-ol + NADP(+) = (Z)-non-6-enal + NADPH + H(+). The enzyme catalyses nonan-1-ol + NADP(+) = nonanal + NADPH + H(+). It participates in cofactor metabolism; retinol metabolism. In terms of biological role, retinoids dehydrogenase/reductase with a clear preference for NADP. Displays high activity towards 9-cis, 11-cis and all-trans-retinal. Shows very weak activity towards 13-cis-retinol. Also exhibits activity, albeit with lower affinity than for retinaldehydes, towards lipid peroxidation products (C9 aldehydes) such as 4-hydroxynonenal and trans-2-nonenal. May play an important function in photoreceptor cells to detoxify 4-hydroxynonenal and potentially other toxic aldehyde products resulting from lipid peroxidation. Has no dehydrogenase activity towards steroids. In Homo sapiens (Human), this protein is Retinol dehydrogenase 12 (RDH12).